The following is a 116-amino-acid chain: Phosphoribosyl-AMP cyclohydrolase (116 aa).

A Mg(2+)-binding site is contributed by D80. Residue C81 coordinates Zn(2+). Mg(2+) is bound by residues D82 and D84. C98 and C105 together coordinate Zn(2+).

It belongs to the PRA-CH family. Homodimer. Mg(2+) serves as cofactor. The cofactor is Zn(2+).

Its subcellular location is the cytoplasm. The catalysed reaction is 1-(5-phospho-beta-D-ribosyl)-5'-AMP + H2O = 1-(5-phospho-beta-D-ribosyl)-5-[(5-phospho-beta-D-ribosylamino)methylideneamino]imidazole-4-carboxamide. It participates in amino-acid biosynthesis; L-histidine biosynthesis; L-histidine from 5-phospho-alpha-D-ribose 1-diphosphate: step 3/9. Its function is as follows. Catalyzes the hydrolysis of the adenine ring of phosphoribosyl-AMP. This Trichormus variabilis (strain ATCC 29413 / PCC 7937) (Anabaena variabilis) protein is Phosphoribosyl-AMP cyclohydrolase.